The chain runs to 135 residues: Ribosome-binding factor A (135 aa).

Belongs to the RbfA family. In terms of assembly, monomer. Binds 30S ribosomal subunits, but not 50S ribosomal subunits or 70S ribosomes.

It localises to the cytoplasm. One of several proteins that assist in the late maturation steps of the functional core of the 30S ribosomal subunit. Associates with free 30S ribosomal subunits (but not with 30S subunits that are part of 70S ribosomes or polysomes). Required for efficient processing of 16S rRNA. May interact with the 5'-terminal helix region of 16S rRNA. This is Ribosome-binding factor A from Dinoroseobacter shibae (strain DSM 16493 / NCIMB 14021 / DFL 12).